Consider the following 270-residue polypeptide: Coiled-coil domain-containing protein 3 (270 aa).

Positions 1–21 are cleaved as a signal peptide; sequence MLRQLLLAALCLAGPPAPARA. Asn-100 is a glycosylation site (N-linked (GlcNAc...) asparagine). The stretch at 188–251 forms a coiled coil; sequence SVQKALFEEE…NQKLSEKLAA (64 aa).

In terms of assembly, homodimer. In terms of tissue distribution, expressed in umbilical vein endothelial cells (HUVEC), and at lower levels in aortic smooth muscle cells (HASMC).

It localises to the secreted. Its function is as follows. Negatively regulates TNF-alpha-induced pro-inflammatory response in endothelial cells (ECs) via inhibition of TNF-alpha-induced NF-kappaB activation in ECs. Positively regulates lipid accumulation in adipose cells. The polypeptide is Coiled-coil domain-containing protein 3 (CCDC3) (Homo sapiens (Human)).